Here is a 570-residue protein sequence, read N- to C-terminus: PTS system lactose-specific EIICB component (570 aa).

The region spanning 9–410 is the PTS EIIC type-3 domain; the sequence is IEKGKPFFEK…VVDIIIYYPF (402 aa). The next 9 membrane-spanning stretches (helical) occupy residues 31–51, 65–85, 104–124, 133–153, 178–198, 223–243, 283–303, 340–360, and 382–402; these read GFIS…IAYV, AILM…VAGT, INFI…ASDP, AFMG…TVIV, FKDL…DLVI, GWIG…VGIH, MFIV…MFMW, VFFI…KLFV, and IIMG…LIVV. The PTS EIIB type-3 domain occupies 467–570; the sequence is QTNVLVLCAG…LDFVQQQFEN (104 aa). Catalysis depends on cysteine 474, which acts as the Phosphocysteine intermediate; for EIIB activity. Position 474 is a phosphocysteine; by EIIA (cysteine 474).

The protein localises to the cell membrane. The enzyme catalyses lactose(out) + N(pros)-phospho-L-histidyl-[protein] = lactose 6-phosphate(in) + L-histidyl-[protein]. The phosphoenolpyruvate-dependent sugar phosphotransferase system (sugar PTS), a major carbohydrate active transport system, catalyzes the phosphorylation of incoming sugar substrates concomitantly with their translocation across the cell membrane. The enzyme II LacEF PTS system is involved in lactose transport. This chain is PTS system lactose-specific EIICB component, found in Staphylococcus aureus (strain MSSA476).